A 683-amino-acid polypeptide reads, in one-letter code: Methionine--tRNA ligase (683 aa).

Residues 15 to 25 carry the 'HIGH' region motif; it reads YYPSGKLHIGN. A 'KMSKS' region motif is present at residues 311–315; it reads KMSKS. Lys-314 is an ATP binding site. The 103-residue stretch at 581 to 683 folds into the tRNA-binding domain; it reads DFDKVELKVA…DNMVNGSLIS (103 aa).

It belongs to the class-I aminoacyl-tRNA synthetase family. MetG type 2B subfamily. Homodimer.

Its subcellular location is the cytoplasm. It catalyses the reaction tRNA(Met) + L-methionine + ATP = L-methionyl-tRNA(Met) + AMP + diphosphate. Its function is as follows. Is required not only for elongation of protein synthesis but also for the initiation of all mRNA translation through initiator tRNA(fMet) aminoacylation. This chain is Methionine--tRNA ligase, found in Lactiplantibacillus plantarum (strain ATCC BAA-793 / NCIMB 8826 / WCFS1) (Lactobacillus plantarum).